The chain runs to 199 residues: Probable nicotinate-nucleotide adenylyltransferase (199 aa).

Belongs to the NadD family.

It catalyses the reaction nicotinate beta-D-ribonucleotide + ATP + H(+) = deamido-NAD(+) + diphosphate. The protein operates within cofactor biosynthesis; NAD(+) biosynthesis; deamido-NAD(+) from nicotinate D-ribonucleotide: step 1/1. In terms of biological role, catalyzes the reversible adenylation of nicotinate mononucleotide (NaMN) to nicotinic acid adenine dinucleotide (NaAD). In Leptospira interrogans serogroup Icterohaemorrhagiae serovar copenhageni (strain Fiocruz L1-130), this protein is Probable nicotinate-nucleotide adenylyltransferase.